The following is a 147-amino-acid chain: 3-dehydroquinate dehydratase (147 aa).

Catalysis depends on Tyr26, which acts as the Proton acceptor. The substrate site is built by Asn77, His83, and Asp90. The Proton donor role is filled by His103. Substrate is bound by residues 104-105 (LS) and Arg114.

This sequence belongs to the type-II 3-dehydroquinase family. Homododecamer.

It carries out the reaction 3-dehydroquinate = 3-dehydroshikimate + H2O. It participates in metabolic intermediate biosynthesis; chorismate biosynthesis; chorismate from D-erythrose 4-phosphate and phosphoenolpyruvate: step 3/7. Functionally, catalyzes a trans-dehydration via an enolate intermediate. The chain is 3-dehydroquinate dehydratase from Proteus mirabilis (strain HI4320).